We begin with the raw amino-acid sequence, 404 residues long: DNA replication and repair protein RecF (404 aa).

G30 to T37 serves as a coordination point for ATP.

Belongs to the RecF family.

Its subcellular location is the cytoplasm. The RecF protein is involved in DNA metabolism; it is required for DNA replication and normal SOS inducibility. RecF binds preferentially to single-stranded, linear DNA. It also seems to bind ATP. The polypeptide is DNA replication and repair protein RecF (Clavibacter michiganensis subsp. michiganensis (strain NCPPB 382)).